Consider the following 425-residue polypeptide: D-amino acid dehydrogenase 2 (425 aa).

An FAD-binding site is contributed by 3 to 17; that stretch reads ITVVGAGIVGISTAY.

This sequence belongs to the DadA oxidoreductase family. FAD serves as cofactor.

The catalysed reaction is a D-alpha-amino acid + A + H2O = a 2-oxocarboxylate + AH2 + NH4(+). In terms of biological role, oxidative deamination of D-amino acids. This is D-amino acid dehydrogenase 2 (dadA2) from Ralstonia nicotianae (strain ATCC BAA-1114 / GMI1000) (Ralstonia solanacearum).